The chain runs to 400 residues: S-adenosylmethionine sensor upstream of mTORC1 (400 aa).

The S-adenosyl-L-methionine site is built by arginine 99, glycine 168, aspartate 186, aspartate 198, phenylalanine 199, and serine 240.

Belongs to the BMT2/SAMTOR family. In terms of assembly, interacts with the GATOR1 complex; interaction is disrupted when samtor binds S-adenosyl-L-methionine. Interacts with the KICSTOR complex; interaction is disrupted when samtor binds S-adenosyl-L-methionine.

In terms of biological role, S-adenosyl-L-methionine-binding protein that acts as an inhibitor of mTORC1 signaling via interaction with the GATOR1 and KICSTOR complexes. Acts as a sensor of S-adenosyl-L-methionine to signal methionine sufficiency to mTORC1: in presence of methionine, binds S-adenosyl-L-methionine, leading to disrupt interaction with the GATOR1 and KICSTOR complexes and promote mTORC1 signaling. Upon methionine starvation, S-adenosyl-L-methionine levels are reduced, thereby promoting the association with GATOR1 and KICSTOR, leading to inhibit mTORC1 signaling. Probably also acts as a S-adenosyl-L-methionine-dependent methyltransferase. The sequence is that of S-adenosylmethionine sensor upstream of mTORC1 from Xenopus tropicalis (Western clawed frog).